Reading from the N-terminus, the 362-residue chain is Glutaminase-asparaginase (362 aa).

An N-terminal signal peptide occupies residues 1-25 (MKPLLHAFAPGVMALMLLLPQAAQA). The Asparaginase/glutaminase domain occupies 35 to 362 (SNVVILATGG…KELQRIFWEY (328 aa)). The Acyl-ester intermediate role is filled by T45. Residues S92 and 125–126 (TD) contribute to the substrate site.

The protein belongs to the asparaginase 1 family. As to quaternary structure, homotetramer.

Its subcellular location is the periplasm. It carries out the reaction L-glutamine + H2O = L-glutamate + NH4(+). The catalysed reaction is L-asparagine + H2O = L-aspartate + NH4(+). This chain is Glutaminase-asparaginase (ansB), found in Pseudomonas aeruginosa (strain ATCC 15692 / DSM 22644 / CIP 104116 / JCM 14847 / LMG 12228 / 1C / PRS 101 / PAO1).